Here is a 1201-residue protein sequence, read N- to C-terminus: MSDPASTSIPAHATNGEAHAPNDHHHAQLPLSDSKPVSVNRKKQKRRQKQAARLAAERQFGNGHISADMSEQNGLSPTAPASHVSDDHDLDERANGETYYEEIHDATHDLDDHPPNLSNGQPGQQNATARKSKKKKGKKNRAGSQTMGDESSTPLSTPSVSMSQHLPPPLPSHLPHTLLKTSKDRSIWNTSTQEERENIKTFWLELGEEERRQLVKVEKDAVLKKMKEQQKHSCSCTVCGRKRTAIEEELEVLYDAYYEELEQYANNNQGSFEKGPPMVPPPRLYHPPLRSPGQHTRTQGQFHPSRGRIHELPEDDEDLEEDYDEDDEDDEPYSDDEYEDEETRAARADFFAFGNSLTVKGRRQIMLLSFIFPKPVTNLIFTLADGILTVADDLLKNDGKHFIDMMEQLAERRMQREEDTQYGIAAAHQSLHGGHNHGPLDDDDYDEEEDEDYDSQEDEDYEEDEMVSSGNWPGGDAVQADSFLQDAMTEEQRMEEGRRMFQIFAARMFEQRVLTAYREKVAEQRQQKLIEELMEEQTRNEQRNAKKAREAQKRKDKKKLQKQAKEEEKARREAEKAAEEAAAKAEQEKKLEEQRRKREEQKKKREAERKAQEAERLRKEAEKQKRLREERERQAEIERKQREQKELEKKRREEARQNELREKKTKDERERKLREAAPKTDYEGQEKRDPQAKRVSHTGPVPIPASLQHAQALPAYLQSPHYQIATPIVPKAPTPARPRQPSQQGSHTSSPRSQPASTEPSQVSISPRSMAPSQSSGASSVTSKQGHGQPPLLHHPQPSTPLSPLGALNRSHPPGFSPSNPPGLGLVARPPIGHELPSYPPHSGPLMNQLRGFPAPNGLPVLPGMNGTRPMPPGRGFPLDPGHGLAFHQQPIANAFAAQPSGLSHAHSRQPSSSFERSPLDAHAFPISRPSPIKRPSSTQQDQNNRSAQRDVDDLSAHLGSSALLDDSDVPFTSNLSQSLPGATAPGTLPGPTRASFAGTSLFADPLAAKHSGFPIGPSVGNTWSTQIPFGTSPFPSAPTWGTGPGSGWSNNAFAPGGHHRAHTSRPVTIRLLVIQACKQLNMMSPSKGASGYHDVKVVLRQVDQLRPVNEPPISLKEMLDICDTEGNSQNGGGSFSIRSDETGECVKFEPDTNSASSGHRGSIVPGEIGSPVPSSSLPAFGGIGSSTPSVLRQFSSPTGF.

Disordered regions lie at residues 1-178 (MSDP…PHTL), 268-341 (NQGS…YEDE), 429-478 (QSLH…GDAV), 535-707 (EEQT…PASL), 724-848 (IATP…PLMN), 899-952 (QPSG…QRDV), and 1150-1169 (EPDT…PGEI). A compositionally biased stretch (basic residues) spans 40–50 (NRKKQKRRQKQ). Positions 84–114 (VSDDHDLDERANGETYYEEIHDATHDLDDHP) are enriched in basic and acidic residues. Polar residues predominate over residues 116–128 (NLSNGQPGQQNAT). The segment covering 130–141 (RKSKKKKGKKNR) has biased composition (basic residues). 2 stretches are compositionally biased toward polar residues: residues 145–164 (QTMG…SMSQ) and 293–302 (GQHTRTQGQF). Composition is skewed to acidic residues over residues 313–341 (PEDD…YEDE) and 441–466 (DDDD…EDEM). The stretch at 520-673 (KVAEQRQQKL…KTKDERERKL (154 aa)) forms a coiled coil. Basic and acidic residues-rich tracts occupy residues 535–553 (EEQT…EAQK) and 563–692 (QAKE…DPQA). Over residues 740–767 (QPSQQGSHTSSPRSQPASTEPSQVSISP) the composition is skewed to polar residues. Composition is skewed to low complexity over residues 769-805 (SMAP…LSPL) and 926-938 (PISR…RPSS).

The protein belongs to the NST1 family.

Its subcellular location is the cytoplasm. Its function is as follows. May act as a negative regulator of salt tolerance. The sequence is that of Stress response protein nst1 (nst1) from Aspergillus niger (strain ATCC MYA-4892 / CBS 513.88 / FGSC A1513).